We begin with the raw amino-acid sequence, 195 residues long: Interferon tau-1 (195 aa).

Residues Met1–Gly23 form the signal peptide. 2 cysteine pairs are disulfide-bonded: Cys24-Cys122 and Cys52-Cys162. A glycan (N-linked (GlcNAc...) asparagine) is linked at Asn101.

This sequence belongs to the alpha/beta interferon family. IFN-alphaII subfamily. As to expression, constitutively and exclusively expressed in the mononuclear cells of the extraembryonic trophectoderm.

The protein localises to the secreted. Its function is as follows. Paracrine hormone primarily responsible for maternal recognition of pregnancy. Interacts with endometrial receptors, probably type I interferon receptors, and blocks estrogen receptor expression, preventing the estrogen-induced increase in oxytocin receptor expression in the endometrium. This results in the suppression of the pulsatile endometrial release of the luteolytic hormone prostaglandin F2-alpha, hindering the regression of the corpus luteum (luteolysis) and therefore a return to ovarian cyclicity. This, and a possible direct effect of IFN-tau on prostaglandin synthesis, leads in turn to continued ovarian progesterone secretion, which stimulates the secretion by the endometrium of the nutrients required for the growth of the conceptus. In summary, displays particularly high antiviral and antiproliferative potency concurrently with particular weak cytotoxicity, high antiluteolytic activity and immunomodulatory properties. In contrast with other IFNs, IFN-tau is not virally inducible. This chain is Interferon tau-1 (IFNT1), found in Bos taurus (Bovine).